A 721-amino-acid polypeptide reads, in one-letter code: Glycine--tRNA ligase beta subunit (721 aa).

The protein belongs to the class-II aminoacyl-tRNA synthetase family. As to quaternary structure, tetramer of two alpha and two beta subunits.

It localises to the cytoplasm. It carries out the reaction tRNA(Gly) + glycine + ATP = glycyl-tRNA(Gly) + AMP + diphosphate. The polypeptide is Glycine--tRNA ligase beta subunit (Sinorhizobium medicae (strain WSM419) (Ensifer medicae)).